The chain runs to 213 residues: Small ribosomal subunit protein uS7 (213 aa).

It belongs to the universal ribosomal protein uS7 family. Component of the small ribosomal subunit (SSU). Mature N.crassa ribosomes consist of a small (40S) and a large (60S) subunit. The 40S small subunit contains 1 molecule of ribosomal RNA (18S rRNA) and at least 32 different proteins. The large 60S subunit contains 3 rRNA molecules (26S, 5.8S and 5S rRNA) and at least 42 different proteins.

Its subcellular location is the cytoplasm. Its function is as follows. Component of the ribosome, a large ribonucleoprotein complex responsible for the synthesis of proteins in the cell. The small ribosomal subunit (SSU) binds messenger RNAs (mRNAs) and translates the encoded message by selecting cognate aminoacyl-transfer RNA (tRNA) molecules. The large subunit (LSU) contains the ribosomal catalytic site termed the peptidyl transferase center (PTC), which catalyzes the formation of peptide bonds, thereby polymerizing the amino acids delivered by tRNAs into a polypeptide chain. The nascent polypeptides leave the ribosome through a tunnel in the LSU and interact with protein factors that function in enzymatic processing, targeting, and the membrane insertion of nascent chains at the exit of the ribosomal tunnel. The polypeptide is Small ribosomal subunit protein uS7 (rps-5) (Neurospora crassa (strain ATCC 24698 / 74-OR23-1A / CBS 708.71 / DSM 1257 / FGSC 987)).